The sequence spans 164 residues: Nucleotide-binding protein Mfla_1706 (164 aa).

It belongs to the YajQ family.

Its function is as follows. Nucleotide-binding protein. The sequence is that of Nucleotide-binding protein Mfla_1706 from Methylobacillus flagellatus (strain ATCC 51484 / DSM 6875 / VKM B-1610 / KT).